We begin with the raw amino-acid sequence, 610 residues long: Protein Smaug homolog 1 (610 aa).

S67 carries the phosphoserine modification. Disordered stretches follow at residues 177-222 (ARGP…EEGS), 318-366 (SSPS…LQPP), and 464-487 (NRGFGQSNSLPTASSVGSGMGRRN). The SAM domain maps to 222 to 295 (SGMKDVPAWL…LKSLERDIIE (74 aa)). A Phosphoserine modification is found at S319. T323 carries the phosphothreonine modification. Low complexity predominate over residues 344–358 (SAATVTSATASASAG). R465 bears the Omega-N-methylarginine mark. The span at 467 to 480 (FGQSNSLPTASSVG) shows a compositional bias: polar residues. Residue S472 is modified to Phosphoserine.

It belongs to the SMAUG family. As to expression, expressed in brain (at protein level).

The protein localises to the cytoplasm. Its subcellular location is the cell projection. It localises to the dendrite. It is found in the synapse. The protein resides in the synaptosome. Acts as a translational repressor of SRE-containing messengers. This Rattus norvegicus (Rat) protein is Protein Smaug homolog 1 (Samd4a).